A 798-amino-acid chain; its full sequence is MSLVYLLSTLILIMVILLFTLTNIKFQKYAGHIALLAPIVASVYFLYQLPSVMQGNFVSVKIPWLTLLDINIDFRLDGLSLFFSLLISLIGLAVVYYATQYLSKEHDNLPRFYVYLLLFMFSMLGIVTANNTILMYVFWELTSVSSFLLIVYWYSKGDSQFGAIQSFMITVFGGLALLAGFIMIYIVTGTNSITSIIEQSDKIAQSHLFIPIIILLLLGAFTKSAQFPFHIWLPKAMAAPTPVSAYLHSATMVKAGIFLLFRFTSVLGLSDFYIYSVTFVGLITMIFGAVNATRQFDMKAILAYSTISQLGMIVSMVGLGGGFAQHPTGELSKIYGMILFAALFHLMNHALYKGALFMGVGIIDHETGTRDIRRLSGLKKVFPITHIVMLLSALSMAGIPFLNGFLSKEMFFDGLVSTVELPQFNLTLTVIITVIGVIASIFTLVYGVYMIKEVFWGDYQQADLPKKSPHEPFLFTLPSAIMMILLPVIFFIPNLFGHNIILPALRSITIGEKVDQVAPHVSQWHGFNLPLILSLIVIVVGFIMALRINWKKYANQVKVKTITDLYLGSYKQFEHYSGYGIRSLMNNRLNHYITITLLIFSMVVIYGMIQAGFPEVHQIHVSDFGPIEVITLIVVFVLGIALTFIRQRLTMVVLNGIIGYCVTIFFILMKAPDLALTQLVVETITTILFIVSFSRLPNVPRAKVNKKREAVKIIVSLLMAVIVVTLVFIAQQGDSMPTISTFYHDAYKLTGGKNIVNAILGDFRAIDTLFEGMVLIIAGLGIYTLLNFKERRGQDERE.

Transmembrane regions (helical) follow at residues 1–21 (MSLV…LFTL), 33–53 (IALL…PSVM), 78–98 (GLSL…VYYA), 109–129 (LPRF…IVTA), 133–153 (ILMY…IVYW), 167–187 (FMIT…IYIV), 209–229 (FIPI…QFPF), 241–261 (TPVS…FLLF), 272–292 (FYIY…AVNA), 300–320 (AILA…VGLG), 337–357 (MILF…GALF), 381–401 (VFPI…GIPF), 431–451 (IITV…VYMI), 472–492 (PFLF…IFFI), 526–546 (GFNL…IMAL), 593–613 (ITIT…QAGF), 625–645 (GPIE…LTFI), 649–669 (LTMV…FILM), 674–694 (LALT…VSFS), 710–730 (AVKI…VFIA), and 766–786 (IDTL…YTLL).

It belongs to the CPA3 antiporters (TC 2.A.63) subunit A family. May form a heterooligomeric complex that consists of seven subunits: mnhA2, mnhB2, mnhC2, mnhD2, mnhE2, mnhF2 and mnhG2.

It is found in the cell membrane. The chain is Putative antiporter subunit mnhA2 (mnhA2) from Staphylococcus saprophyticus subsp. saprophyticus (strain ATCC 15305 / DSM 20229 / NCIMB 8711 / NCTC 7292 / S-41).